Consider the following 509-residue polypeptide: ATP synthase subunit alpha (509 aa).

169–176 (GDRQTGKT) lines the ATP pocket.

Belongs to the ATPase alpha/beta chains family. F-type ATPases have 2 components, CF(1) - the catalytic core - and CF(0) - the membrane proton channel. CF(1) has five subunits: alpha(3), beta(3), gamma(1), delta(1), epsilon(1). CF(0) has three main subunits: a(1), b(2) and c(9-12). The alpha and beta chains form an alternating ring which encloses part of the gamma chain. CF(1) is attached to CF(0) by a central stalk formed by the gamma and epsilon chains, while a peripheral stalk is formed by the delta and b chains.

It localises to the cell inner membrane. It catalyses the reaction ATP + H2O + 4 H(+)(in) = ADP + phosphate + 5 H(+)(out). Its function is as follows. Produces ATP from ADP in the presence of a proton gradient across the membrane. The alpha chain is a regulatory subunit. This chain is ATP synthase subunit alpha, found in Agrobacterium fabrum (strain C58 / ATCC 33970) (Agrobacterium tumefaciens (strain C58)).